Reading from the N-terminus, the 371-residue chain is 3-dehydroquinate synthase (371 aa).

NAD(+)-binding positions include 70-75 (DAEDGK), 104-108 (GAVTD), 128-129 (TT), Lys141, and Lys150. The Zn(2+) site is built by Glu183, His246, and His262.

It belongs to the sugar phosphate cyclases superfamily. Dehydroquinate synthase family. Requires Co(2+) as cofactor. The cofactor is Zn(2+). It depends on NAD(+) as a cofactor.

Its subcellular location is the cytoplasm. It catalyses the reaction 7-phospho-2-dehydro-3-deoxy-D-arabino-heptonate = 3-dehydroquinate + phosphate. It participates in metabolic intermediate biosynthesis; chorismate biosynthesis; chorismate from D-erythrose 4-phosphate and phosphoenolpyruvate: step 2/7. Catalyzes the conversion of 3-deoxy-D-arabino-heptulosonate 7-phosphate (DAHP) to dehydroquinate (DHQ). This chain is 3-dehydroquinate synthase, found in Saccharopolyspora erythraea (strain ATCC 11635 / DSM 40517 / JCM 4748 / NBRC 13426 / NCIMB 8594 / NRRL 2338).